Consider the following 101-residue polypeptide: Gamma-secretase subunit PEN-2 (101 aa).

Topologically, residues Met1–Lys17 are cytoplasmic. An intramembrane region (helical) is located at residues Tyr18–Trp36. The Cytoplasmic segment spans residues Phe37–Val57. The helical transmembrane segment at Trp58 to Phe78 threads the bilayer. Residues Gln79 to Pro101 are Lumenal-facing.

Belongs to the PEN-2 family. In terms of assembly, the functional gamma-secretase complex is composed of at least four polypeptides: a presenilin homodimer (PSEN1 or PSEN2), nicastrin (NCSTN), APH1 (APH1A or APH1B) and PSENEN.

It localises to the endoplasmic reticulum membrane. Its subcellular location is the golgi apparatus. It is found in the golgi stack membrane. The protein localises to the cell membrane. The protein resides in the membrane. Essential subunit of the gamma-secretase complex, an endoprotease complex that catalyzes the intramembrane cleavage of integral membrane proteins such as Notch receptors and APP (amyloid-beta precursor protein). The gamma-secretase complex plays a role in Notch and Wnt signaling cascades and regulation of downstream processes via its role in processing key regulatory proteins, and by regulating cytosolic CTNNB1 levels. PSENEN modulates both endoproteolysis of presenilin and gamma-secretase activity. The chain is Gamma-secretase subunit PEN-2 (Psenen) from Rattus norvegicus (Rat).